Reading from the N-terminus, the 469-residue chain is 3-isopropylmalate dehydratase large subunit (469 aa).

[4Fe-4S] cluster contacts are provided by cysteine 347, cysteine 408, and cysteine 411.

The protein belongs to the aconitase/IPM isomerase family. LeuC type 1 subfamily. Heterodimer of LeuC and LeuD. [4Fe-4S] cluster is required as a cofactor.

It catalyses the reaction (2R,3S)-3-isopropylmalate = (2S)-2-isopropylmalate. The protein operates within amino-acid biosynthesis; L-leucine biosynthesis; L-leucine from 3-methyl-2-oxobutanoate: step 2/4. Catalyzes the isomerization between 2-isopropylmalate and 3-isopropylmalate, via the formation of 2-isopropylmaleate. The polypeptide is 3-isopropylmalate dehydratase large subunit (Haemophilus influenzae (strain 86-028NP)).